The following is a 329-amino-acid chain: DNA-directed RNA polymerase subunit alpha (329 aa).

The interval 1–231 is alpha N-terminal domain (alpha-NTD); sequence MSILSFQMPE…KHFMLFSDQT (231 aa). Residues 247–329 form an alpha C-terminal domain (alpha-CTD) region; it reads EEFLHMRKLL…DTAKYKLDED (83 aa).

This sequence belongs to the RNA polymerase alpha chain family. Homodimer. The RNAP catalytic core consists of 2 alpha, 1 beta, 1 beta' and 1 omega subunit. When a sigma factor is associated with the core the holoenzyme is formed, which can initiate transcription.

It carries out the reaction RNA(n) + a ribonucleoside 5'-triphosphate = RNA(n+1) + diphosphate. Its function is as follows. DNA-dependent RNA polymerase catalyzes the transcription of DNA into RNA using the four ribonucleoside triphosphates as substrates. The sequence is that of DNA-directed RNA polymerase subunit alpha from Cytophaga hutchinsonii (strain ATCC 33406 / DSM 1761 / CIP 103989 / NBRC 15051 / NCIMB 9469 / D465).